Reading from the N-terminus, the 143-residue chain is Transcriptional regulator MraZ (143 aa).

2 SpoVT-AbrB domains span residues 5-47 (TYTP…SARE) and 76-119 (ASDE…DSES).

The protein belongs to the MraZ family. Forms oligomers.

Its subcellular location is the cytoplasm. It is found in the nucleoid. The polypeptide is Transcriptional regulator MraZ (Micrococcus luteus (strain ATCC 4698 / DSM 20030 / JCM 1464 / CCM 169 / CCUG 5858 / IAM 1056 / NBRC 3333 / NCIMB 9278 / NCTC 2665 / VKM Ac-2230) (Micrococcus lysodeikticus)).